Reading from the N-terminus, the 577-residue chain is Protein CBFA2T1 (577 aa).

Over residues 1 to 10 (MPDRTEKHST) the composition is skewed to basic and acidic residues. The disordered stretch occupies residues 1 to 87 (MPDRTEKHST…SSSSLANQQL (87 aa)). Ser-14 is modified (phosphoserine). Positions 42 to 59 (SSFTPTTLTNGTSHSPTA) are enriched in polar residues. Over residues 68-87 (NGFSNGPSSSSSSSLANQQL) the composition is skewed to low complexity. Residues 93-188 (ARQLSKLKRF…NPAQYLAQHE (96 aa)) form the TAFH domain. The tract at residues 203-271 (SELLLDVNEN…LPHPTPPPPQ (69 aa)) is disordered. Residues 211-237 (ENGKRRTPDRTKENGFDREPLHSEHPS) show a composition bias toward basic and acidic residues. A compositionally biased stretch (polar residues) spans 244–258 (SPGQRYSPNNGLSYQ). Residues 262-271 (LPHPTPPPPQ) show a composition bias toward pro residues. Residues 310–356 (QEEMIDHRLTDREWAEEWKHLDHLLNCIMDMVEKTRRSLTVLRRCQE) form an important for oligomerization region. Positions 310-356 (QEEMIDHRLTDREWAEEWKHLDHLLNCIMDMVEKTRRSLTVLRRCQE) are nervy homology region 2 (NHR2). Residues 374–396 (DLKKGGSSSSSHSRQQSPVNPDP) are disordered. The span at 380–390 (SSSSSHSRQQS) shows a compositional bias: low complexity. Ser-390 carries the post-translational modification Phosphoserine. A nervy homology region 3 (NHR3) region spans residues 416–465 (EEIWKKAEEAVNEVKRQAMTELQKAVSEAERKAHDMITTERAKMERTVAE). Cys-488, Cys-491, Cys-499, Cys-502, Cys-508, Cys-512, His-520, and Cys-524 together coordinate Zn(2+). The MYND-type zinc-finger motif lies at 488 to 524 (CWNCGRKASETCSGCNTARYCGSFCQHKDWEKHHHIC). The segment at 529–577 (QAPQQGDTPAVSSSVTPSSGAGSPMDTPPAATPRSTTPGTPSTIETTPR) is disordered. Low complexity-rich tracts occupy residues 536–553 (TPAV…GSPM) and 560–577 (TPRS…TTPR).

This sequence belongs to the CBFA2T family. Homotetramer. Heterotetramer with CBFA2T2 and CBFA2T3. Interacts with TCF12, SIN3A, HDAC1, HDAC2, HDAC3, NCOR1 and NCOR2. Interacts with ATN1 (via its N-terminus); the interaction enhances the transcriptional repression.

The protein resides in the nucleus. Transcriptional corepressor which facilitates transcriptional repression via its association with DNA-binding transcription factors and recruitment of other corepressors and histone-modifying enzymes. Can repress the expression of MMP7 in a ZBTB33-dependent manner. Can repress transactivation mediated by TCF12. Acts as a negative regulator of adipogenesis. The sequence is that of Protein CBFA2T1 (Runx1t1) from Mus musculus (Mouse).